The chain runs to 469 residues: ATP-dependent protease ATPase subunit HslU (469 aa).

ATP-binding positions include Ile24 and 66 to 71; that span reads GVGKTE. The tract at residues 159 to 179 is disordered; that stretch reads LFGSMNQPDEPAEEEVDQELK. The ATP site is built by Asp282, Glu347, and Arg419.

Belongs to the ClpX chaperone family. HslU subfamily. In terms of assembly, a double ring-shaped homohexamer of HslV is capped on each side by a ring-shaped HslU homohexamer. The assembly of the HslU/HslV complex is dependent on binding of ATP.

It localises to the cytoplasm. In terms of biological role, ATPase subunit of a proteasome-like degradation complex; this subunit has chaperone activity. The binding of ATP and its subsequent hydrolysis by HslU are essential for unfolding of protein substrates subsequently hydrolyzed by HslV. HslU recognizes the N-terminal part of its protein substrates and unfolds these before they are guided to HslV for hydrolysis. This is ATP-dependent protease ATPase subunit HslU from Listeria innocua serovar 6a (strain ATCC BAA-680 / CLIP 11262).